We begin with the raw amino-acid sequence, 253 residues long: Tetraspanin-11 (253 aa).

Transmembrane regions (helical) follow at residues 19–39 (LLFVFNFFFWVGGAAVLAVGI), 63–83 (ILIFAGVLVMVTGFLGFGAIL), and 93–113 (YFCLLLVIFLVELVAGVLAHV). Asparagine 127 carries N-linked (GlcNAc...) asparagine glycosylation. A helical transmembrane segment spans residues 220 to 240 (LLLMGAVGIGVACLQICGMVL).

The protein belongs to the tetraspanin (TM4SF) family.

It is found in the membrane. The polypeptide is Tetraspanin-11 (TSPAN11) (Homo sapiens (Human)).